We begin with the raw amino-acid sequence, 344 residues long: Cathepsin B-like cysteine proteinase 5 (344 aa).

Positions 1-15 (MWKLSAILLVAAASA) are cleaved as a signal peptide. Residues 16-81 (VVIPGHREAP…DIVATEVSDA (66 aa)) constitute a propeptide that is removed on maturation. Disulfide bonds link Cys-95–Cys-124, Cys-107–Cys-154, Cys-143–Cys-213, Cys-144–Cys-150, Cys-183–Cys-217, and Cys-191–Cys-203. Residue Cys-110 is part of the active site. Catalysis depends on residues His-286 and Asn-306.

Belongs to the peptidase C1 family.

This chain is Cathepsin B-like cysteine proteinase 5 (cpr-5), found in Caenorhabditis elegans.